Consider the following 218-residue polypeptide: Small ribosomal subunit protein uS3c (218 aa).

Residues 47–118 (VQKNMRIFSG…KLNIAITRIG (72 aa)) form the KH type-2 domain.

The protein belongs to the universal ribosomal protein uS3 family. As to quaternary structure, part of the 30S ribosomal subunit.

It localises to the plastid. It is found in the chloroplast. In Cucumis sativus (Cucumber), this protein is Small ribosomal subunit protein uS3c (rps3).